The sequence spans 455 residues: Chromosomal replication initiator protein DnaA (455 aa).

The domain I, interacts with DnaA modulators stretch occupies residues methionine 1 to proline 70. Residues proline 70 to alanine 113 form a domain II region. Positions lysine 87–aspartate 109 are disordered. Over residues alanine 91 to arginine 102 the composition is skewed to low complexity. Residues proline 114–alanine 335 form a domain III, AAA+ region region. The ATP site is built by glycine 158, glycine 160, lysine 161, and threonine 162. The domain IV, binds dsDNA stretch occupies residues serine 336–alanine 455.

It belongs to the DnaA family. As to quaternary structure, oligomerizes as a right-handed, spiral filament on DNA at oriC.

It localises to the cytoplasm. Functionally, plays an essential role in the initiation and regulation of chromosomal replication. ATP-DnaA binds to the origin of replication (oriC) to initiate formation of the DNA replication initiation complex once per cell cycle. Binds the DnaA box (a 9 base pair repeat at the origin) and separates the double-stranded (ds)DNA. Forms a right-handed helical filament on oriC DNA; dsDNA binds to the exterior of the filament while single-stranded (ss)DNA is stabiized in the filament's interior. The ATP-DnaA-oriC complex binds and stabilizes one strand of the AT-rich DNA unwinding element (DUE), permitting loading of DNA polymerase. After initiation quickly degrades to an ADP-DnaA complex that is not apt for DNA replication. Binds acidic phospholipids. The sequence is that of Chromosomal replication initiator protein DnaA from Cereibacter sphaeroides (strain ATCC 17029 / ATH 2.4.9) (Rhodobacter sphaeroides).